Here is a 308-residue protein sequence, read N- to C-terminus: Aspartate carbamoyltransferase catalytic subunit (308 aa).

Carbamoyl phosphate is bound by residues Arg59 and Thr60. L-aspartate is bound at residue Lys87. Positions 109, 137, and 140 each coordinate carbamoyl phosphate. L-aspartate contacts are provided by Arg170 and Arg224. The carbamoyl phosphate site is built by Gly265 and Pro266.

It belongs to the aspartate/ornithine carbamoyltransferase superfamily. ATCase family. In terms of assembly, heterododecamer (2C3:3R2) of six catalytic PyrB chains organized as two trimers (C3), and six regulatory PyrI chains organized as three dimers (R2).

The enzyme catalyses carbamoyl phosphate + L-aspartate = N-carbamoyl-L-aspartate + phosphate + H(+). The protein operates within pyrimidine metabolism; UMP biosynthesis via de novo pathway; (S)-dihydroorotate from bicarbonate: step 2/3. Functionally, catalyzes the condensation of carbamoyl phosphate and aspartate to form carbamoyl aspartate and inorganic phosphate, the committed step in the de novo pyrimidine nucleotide biosynthesis pathway. The chain is Aspartate carbamoyltransferase catalytic subunit from Flavobacterium johnsoniae (strain ATCC 17061 / DSM 2064 / JCM 8514 / BCRC 14874 / CCUG 350202 / NBRC 14942 / NCIMB 11054 / UW101) (Cytophaga johnsonae).